A 318-amino-acid chain; its full sequence is Thiohydrolase aneE (318 aa).

Belongs to the polyketide transferase af380 family.

The enzyme catalyses aculene D + L-prolyl-[peptidyl-carrier protein] = aculene B + holo-[peptidyl-carrier protein]. It carries out the reaction aculene C + L-prolyl-[peptidyl-carrier protein] = aculene A + holo-[peptidyl-carrier protein]. Its pathway is secondary metabolite biosynthesis. Functionally, thiohydrolase; part of the gene cluster that mediates the biosynthesis of aculenes, a unique type of norsesquiterpenes that contain a nordaucane skeleton linked to an L-proline moiety and are of mixed biosynthetic origin. The pathway begins with the synthesis of dauca-4,7-diene by the terpene cyclase aneC using farnesyl pyrophosphate (FPP) as substrate. The cytochrome P450 monooxygenase aneF then performs the initial oxidation at C-12 of dauca-4,7-diene to yield asperaculane D. Asperaculane D is substrate of the cytochrome P450 monooxygenase aneD for C-10 hydroxylation to yield asperaculane E. The cytochrome P450 monooxygenase aneG then converts asperaculane E into aculene D via C-2 oxidation. The monomodular nonribosomal peptide synthtase aneB adenylates L-proline and the thiohydrolase aneE transfers this activated L-proline derivative to aculenes D and C to produce respectively aculenes B and A. The dioxygenase aneA converts aculene D into aculene C, and aculene B into aculene A by introducing the 5,6-alkene moiety. Asperculanes A, B, C and F, as well as 14-prolyl asperculane C, might be shunt products of the pathway. The chain is Thiohydrolase aneE from Aspergillus aculeatus (strain ATCC 16872 / CBS 172.66 / WB 5094).